The chain runs to 180 residues: Ribulose bisphosphate carboxylase small subunit 1A, chloroplastic (180 aa).

The transit peptide at 1–54 directs the protein to the chloroplast; it reads MASSMLSSATMVASPAQATMVAPFNGLKSSAAFPATRKANNDITSITSNGGRVN. Ser-113 is subject to Phosphoserine.

This sequence belongs to the RuBisCO small chain family. Heterohexadecamer of 8 large and 8 small subunits.

It localises to the plastid. It is found in the chloroplast membrane. The protein localises to the chloroplast stroma. Its function is as follows. RuBisCO catalyzes two reactions: the carboxylation of D-ribulose 1,5-bisphosphate, the primary event in carbon dioxide fixation, as well as the oxidative fragmentation of the pentose substrate. Both reactions occur simultaneously and in competition at the same active site. Although the small subunit is not catalytic it is essential for maximal activity. This Arabidopsis thaliana (Mouse-ear cress) protein is Ribulose bisphosphate carboxylase small subunit 1A, chloroplastic (RBCS-1A).